Reading from the N-terminus, the 59-residue chain is Large ribosomal subunit protein uL30 (59 aa).

The protein belongs to the universal ribosomal protein uL30 family. In terms of assembly, part of the 50S ribosomal subunit.

The chain is Large ribosomal subunit protein uL30 from Persephonella marina (strain DSM 14350 / EX-H1).